The following is a 224-amino-acid chain: ATP synthase subunit a (224 aa).

6 consecutive transmembrane segments (helical) span residues 17–37 (LSLNWLSTFLGLLMIPSIYWL), 72–92 (IFISLFSLILFNNFMGLFPYI), 99–119 (LTLTLSLALPLWLCFMLYGWI), 125–145 (MFAHLVPQGTPAILMPFMVCI), 170–190 (LLLTLLGNTGPSMSYLLVTFL), and 195–215 (IALLVLESAVAMIQSYVFAVL).

The protein belongs to the ATPase A chain family. F-type ATPases have 2 components, CF(1) - the catalytic core - and CF(0) - the membrane proton channel. CF(1) has five subunits: alpha(3), beta(3), gamma(1), delta(1), epsilon(1). CF(0) has three main subunits: a, b and c.

It localises to the mitochondrion inner membrane. Mitochondrial membrane ATP synthase (F(1)F(0) ATP synthase or Complex V) produces ATP from ADP in the presence of a proton gradient across the membrane which is generated by electron transport complexes of the respiratory chain. F-type ATPases consist of two structural domains, F(1) - containing the extramembraneous catalytic core and F(0) - containing the membrane proton channel, linked together by a central stalk and a peripheral stalk. During catalysis, ATP synthesis in the catalytic domain of F(1) is coupled via a rotary mechanism of the central stalk subunits to proton translocation. Key component of the proton channel; it may play a direct role in the translocation of protons across the membrane. This is ATP synthase subunit a (mt:ATPase6) from Drosophila simulans (Fruit fly).